A 642-amino-acid polypeptide reads, in one-letter code: MESPTHPKPSKDKTLSWNLAFLVGILFTIDIGMANPSPHQIYNVTWVITNVQTNTQANATSMLGTLTDAYPTLHVDLCDLVGDTWEPIVLNPTNVKHGARYSSSKYGCKTTDRKKQQQTYPFYVCPGHAPSLGPKGTHCGGAQDGFCAAWGCETTGEAWWKPTSSWDYITVKRGSSQDNSCEGKCNPLVLQFTQKGRQASWDGPKMWGLRLYRTGYDPIALFTVSRQVSTITPPQAMGPNLVLPDQKPPSRQSQTGSKVATQRPQTNESAPRSVAPTTMGPKRIGTGDRLINLVQGTYLALNATDPNKTKDCWLCLVSRPPYYEGIAILGNYSNQTNPPPSCLSTPQHKLTISEVSGQGMCIGTVPKTHQALCNKTQQGHTGAHYLAAPNGTYWACNTGLTPCISMAVLNWTSDFCVLIELWPRVTYHQPEYVYTHFAKAVRFRREPISLTVALMLGGLTVGGIAAGVGTGTKALLETAQFRQLQMAMHTDIQALEESISALEKSLTSLSEVVLQNRRGLDILFLQEGGLCAALKEECCFYADHTGLVRDNMAKLRERLKQRQQLFDSQQGWFEGWFNKSPWFTTLISSIMGPLLILLLILLFGPCILNRLVQFVKDRISVVQALILTQQYQQIKQYDPDRP.

A signal peptide spans 1–34 (MESPTHPKPSKDKTLSWNLAFLVGILFTIDIGMA). Over 35-586 (NPSPHQIYNV…FNKSPWFTTL (552 aa)) the chain is Extracellular. 2 N-linked (GlcNAc...) asparagine; by host glycosylation sites follow: N43 and N58. Intrachain disulfides connect C125–C147 and C139–C152. The disordered stretch occupies residues 233–283 (PPQAMGPNLVLPDQKPPSRQSQTGSKVATQRPQTNESAPRSVAPTTMGPKR). Residues 249 to 270 (PSRQSQTGSKVATQRPQTNESA) show a composition bias toward polar residues. Residues N267, N302, and N307 are each glycosylated (N-linked (GlcNAc...) asparagine; by host). 3 disulfide bridges follow: C312-C315, C312-C539, and C531-C538. Residues 312–315 (CWLC) carry the CXXC motif. N-linked (GlcNAc...) asparagine; by host glycans are attached at residues N334, N374, N390, and N410. The segment at 448–468 (ISLTVALMLGGLTVGGIAAGV) is fusion peptide. 2 coiled-coil regions span residues 476 to 525 (LETA…ILFL) and 535 to 571 (KEECCFYADHTGLVRDNMAKLRERLKQRQQLFDSQQG). Residues 514-530 (LQNRRGLDILFLQEGGL) are immunosuppression. The CX6CC signature appears at 531–539 (CAALKEECC). Residues 587 to 607 (ISSIMGPLLILLLILLFGPCI) form a helical membrane-spanning segment. A lipid anchor (S-palmitoyl cysteine; by host) is attached at C606. Topologically, residues 608-642 (LNRLVQFVKDRISVVQALILTQQYQQIKQYDPDRP) are cytoplasmic.

As to quaternary structure, the mature envelope protein (Env) consists of a trimer of SU-TM heterodimers attached by a labile interchain disulfide bond. In terms of processing, specific enzymatic cleavages in vivo yield mature proteins. Envelope glycoproteins are synthesized as an inactive precursor that is N-glycosylated and processed likely by host cell furin or by a furin-like protease in the Golgi to yield the mature SU and TM proteins. The cleavage site between SU and TM requires the minimal sequence [KR]-X-[KR]-R. The R-peptide is released from the C-terminus of the cytoplasmic tail of the TM protein upon particle formation as a result of proteolytic cleavage by the viral protease. Cleavage of this peptide is required for TM to become fusogenic. Post-translationally, the CXXC motif is highly conserved across a broad range of retroviral envelope proteins. It is thought to participate in the formation of a labile disulfide bond possibly with the CX6CC motif present in the transmembrane protein. Isomerization of the intersubunit disulfide bond to an SU intrachain disulfide bond is thought to occur upon receptor recognition in order to allow membrane fusion. The transmembrane protein is palmitoylated. In terms of processing, the R-peptide is palmitoylated.

It localises to the virion membrane. Its subcellular location is the host cell membrane. Its function is as follows. The surface protein (SU) attaches the virus to the host cell by binding to its receptor. This interaction triggers the refolding of the transmembrane protein (TM) and is thought to activate its fusogenic potential by unmasking its fusion peptide. Fusion occurs at the host cell plasma membrane. In terms of biological role, the transmembrane protein (TM) acts as a class I viral fusion protein. Under the current model, the protein has at least 3 conformational states: pre-fusion native state, pre-hairpin intermediate state, and post-fusion hairpin state. During viral and target cell membrane fusion, the coiled coil regions (heptad repeats) assume a trimer-of-hairpins structure, positioning the fusion peptide in close proximity to the C-terminal region of the ectodomain. The formation of this structure appears to drive apposition and subsequent fusion of viral and target cell membranes. Membranes fusion leads to delivery of the nucleocapsid into the cytoplasm. The chain is Envelope glycoprotein (env) from Felidae (cat family).